A 390-amino-acid chain; its full sequence is Succinate--CoA ligase [ADP-forming] subunit beta (390 aa).

The ATP-grasp domain occupies 9–245 (KHLLKKYNIP…TTQEDEHETM (237 aa)). Residues lysine 46, 53–55 (GRG), glutamate 99, serine 102, and glutamate 107 contribute to the ATP site. The Mg(2+) site is built by asparagine 200 and aspartate 214. Substrate is bound by residues asparagine 265 and 322 to 324 (GIV).

Belongs to the succinate/malate CoA ligase beta subunit family. In terms of assembly, heterotetramer of two alpha and two beta subunits. Mg(2+) is required as a cofactor.

The enzyme catalyses succinate + ATP + CoA = succinyl-CoA + ADP + phosphate. It catalyses the reaction GTP + succinate + CoA = succinyl-CoA + GDP + phosphate. It participates in carbohydrate metabolism; tricarboxylic acid cycle; succinate from succinyl-CoA (ligase route): step 1/1. Succinyl-CoA synthetase functions in the citric acid cycle (TCA), coupling the hydrolysis of succinyl-CoA to the synthesis of either ATP or GTP and thus represents the only step of substrate-level phosphorylation in the TCA. The beta subunit provides nucleotide specificity of the enzyme and binds the substrate succinate, while the binding sites for coenzyme A and phosphate are found in the alpha subunit. The polypeptide is Succinate--CoA ligase [ADP-forming] subunit beta (Coxiella burnetii (strain CbuK_Q154) (Coxiella burnetii (strain Q154))).